Here is a 206-residue protein sequence, read N- to C-terminus: Uridine kinase (206 aa).

An ATP-binding site is contributed by 11 to 18 (GGSASGKT).

This sequence belongs to the uridine kinase family.

It is found in the cytoplasm. The enzyme catalyses uridine + ATP = UMP + ADP + H(+). It carries out the reaction cytidine + ATP = CMP + ADP + H(+). Its pathway is pyrimidine metabolism; CTP biosynthesis via salvage pathway; CTP from cytidine: step 1/3. It functions in the pathway pyrimidine metabolism; UMP biosynthesis via salvage pathway; UMP from uridine: step 1/1. This Lactococcus lactis subsp. cremoris (strain MG1363) protein is Uridine kinase.